Consider the following 225-residue polypeptide: Ribonuclease HII (225 aa).

The RNase H type-2 domain occupies 35–225 (GLVAGVDEVG…SFRPCQISLD (191 aa)). A divalent metal cation contacts are provided by aspartate 41, glutamate 42, and aspartate 137.

The protein belongs to the RNase HII family. Mn(2+) is required as a cofactor. Mg(2+) serves as cofactor.

Its subcellular location is the cytoplasm. It carries out the reaction Endonucleolytic cleavage to 5'-phosphomonoester.. Functionally, endonuclease that specifically degrades the RNA of RNA-DNA hybrids. This is Ribonuclease HII from Trichormus variabilis (strain ATCC 29413 / PCC 7937) (Anabaena variabilis).